Here is an 887-residue protein sequence, read N- to C-terminus: Phosphatidylinositol 3-kinase catalytic subunit type 3 (887 aa).

A C2 PI3K-type domain is found at 35-184 (YKAVLEDPML…LAKLTKAHRQ (150 aa)). Residues 150–170 (EADGSEPTKTPGRTSSTLSED) are disordered. Residues 156-170 (PTKTPGRTSSTLSED) show a composition bias toward polar residues. At Thr163 the chain carries Phosphothreonine; by AMPK. The residue at position 165 (Ser165) is a Phosphoserine; by AMPK. Residues Ser244, Ser261, and Ser282 each carry the phosphoserine modification. Residues 282 to 520 (SDHGLKPNAA…PKTHEMYLNV (239 aa)) enclose the PIK helical domain. 2 disordered regions span residues 416-435 (EPTK…NSGI) and 446-468 (ITSP…SSDG). Positions 423–435 (QGSVSESVSNSGI) are enriched in low complexity. Positions 449 to 459 (PLPPVSSPPPA) are enriched in pro residues. Positions 605 to 871 (IPETATLFKS…LIDESVHALF (267 aa)) constitute a PI3K/PI4K catalytic domain. The tract at residues 611–617 (LFKSALM) is G-loop. The catalytic loop stretch occupies residues 740–748 (GVGDRHLDN). Residues 759–780 (HIDFGYILGRDPKPLPPPMKLN) are activation loop.

It belongs to the PI3/PI4-kinase family. As to quaternary structure, component of the PI3K (PI3KC3/PI3K-III/class III phosphatidylinositol 3-kinase) complex the core of which is composed of the catalytic subunit PIK3C3, the regulatory subunit PIK3R4 and BECN1 associating with additional regulatory/auxiliary subunits to form alternative complex forms. Alternative complex forms containing a fourth regulatory subunit in a mutually exclusive manner are: the PI3K complex I (PI3KC3-C1) containing ATG14, and the PI3K complex II (PI3KC3-C2) containing UVRAG. PI3KC3-C1 displays a V-shaped architecture with PIK3R4 serving as a bridge between PIK3C3 and the ATG14:BECN1 subcomplex. Both, PI3KC3-C1 and PI3KC3-C2, can associate with further regulatory subunits such as RUBCN, SH3GLB1/Bif-1 and AMBRA1. PI3KC3-C1 probably associates with PIK3CB. Interacts with RAB7A in the presence of PIK3R4. Interacts with AMBRA1. Interacts with BECN1P1/BECN2. Interacts with SLAMF1. May be a component of a complex composed of RAB5A (in GDP-bound form), DYN2 and PIK3C3. Interacts with NCKAP1L. Interacts with ATG14; this interaction is increased in the absence of TMEM39A. Interacts with STEEP1; the interaction is STING1-dependent and required for trafficking of STING1 from the endoplasmic reticulum. Interacts with YWHAG. Interacts with ARMC3. It depends on Mn(2+) as a cofactor. Ubiquitinated via 'Lys-29'- and 'Lys-48'-linked ubiquitination by UBE3C, promoting its degradation. Deubiquitination by ZRANB1/TRABID promotes its stabilization, leading to autophagosome maturation.

It localises to the midbody. The protein localises to the late endosome. The protein resides in the cytoplasmic vesicle. Its subcellular location is the autophagosome. The catalysed reaction is a 1,2-diacyl-sn-glycero-3-phospho-(1D-myo-inositol) + ATP = a 1,2-diacyl-sn-glycero-3-phospho-(1D-myo-inositol-3-phosphate) + ADP + H(+). In terms of biological role, catalytic subunit of the PI3K complex that mediates formation of phosphatidylinositol 3-phosphate; different complex forms are believed to play a role in multiple membrane trafficking pathways: PI3KC3-C1 is involved in initiation of autophagosomes and PI3KC3-C2 in maturation of autophagosomes and endocytosis. As part of PI3KC3-C1, promotes endoplasmic reticulum membrane curvature formation prior to vesicle budding. Involved in regulation of degradative endocytic trafficking and required for the abscission step in cytokinesis, probably in the context of PI3KC3-C2. Involved in the transport of lysosomal enzyme precursors to lysosomes. Required for transport from early to late endosomes. The polypeptide is Phosphatidylinositol 3-kinase catalytic subunit type 3 (Sus scrofa (Pig)).